The sequence spans 403 residues: DNA primase DnaG (403 aa).

Residues 172–248 (DSVIIVEGRA…HIDYIARAPP (77 aa)) enclose the Toprim domain. Mg(2+)-binding residues include Glu-178, Asp-222, and Asp-224. The interval 279–300 (AAGEKTEAPAQPTQQQPPPAEA) is disordered.

It belongs to the archaeal DnaG primase family. Forms a ternary complex with MCM helicase and DNA. Component of the archaeal exosome complex. The cofactor is Mg(2+).

It carries out the reaction ssDNA + n NTP = ssDNA/pppN(pN)n-1 hybrid + (n-1) diphosphate.. In terms of biological role, RNA polymerase that catalyzes the synthesis of short RNA molecules used as primers for DNA polymerase during DNA replication. Also part of the exosome, which is a complex involved in RNA degradation. Acts as a poly(A)-binding protein that enhances the interaction between heteromeric, adenine-rich transcripts and the exosome. The polypeptide is DNA primase DnaG (Pyrobaculum neutrophilum (strain DSM 2338 / JCM 9278 / NBRC 100436 / V24Sta) (Thermoproteus neutrophilus)).